Here is a 613-residue protein sequence, read N- to C-terminus: Cilia- and flagella-associated protein 100 (613 aa).

Residues 36–55 (KSKESKKNKGNVTISDRSSN) form a disordered region. Residues 45-55 (GNVTISDRSSN) are compositionally biased toward polar residues. Coiled-coil stretches lie at residues 167–198 (ALAMKRNEIQRLEMLATREENRLERAEKFLEK), 233–260 (VEIRELTAQITSIKSEISKFEDTLKHYK), 396–435 (FTKLEEENLSLIQNTQEMEETLDELNVTLKNTQIRMDKEV), and 504–580 (GTVQ…RGRK).

This sequence belongs to the CFAP100 family.

It localises to the cytoplasm. Its subcellular location is the cytoskeleton. The protein localises to the cilium axoneme. In terms of biological role, may play a role in ciliary/flagellar motility by regulating the assembly and the activity of axonemal inner dynein arm. The sequence is that of Cilia- and flagella-associated protein 100 from Mus musculus (Mouse).